The sequence spans 98 residues: DNA-binding protein Fis (98 aa).

Positions 74–93 (QTRAATMLGINRGTLRKKLK) form a DNA-binding region, H-T-H motif.

Belongs to the transcriptional regulatory Fis family. As to quaternary structure, homodimer.

Functionally, activates ribosomal RNA transcription. Plays a direct role in upstream activation of rRNA promoters. In Glaesserella parasuis serovar 5 (strain SH0165) (Haemophilus parasuis), this protein is DNA-binding protein Fis.